Consider the following 148-residue polypeptide: Deoxyuridine 5'-triphosphate nucleotidohydrolase (148 aa).

Substrate contacts are provided by residues 68–70 (RSG), Asn81, 85–87 (TVD), and Lys95.

It belongs to the dUTPase family. The cofactor is Mg(2+).

It catalyses the reaction dUTP + H2O = dUMP + diphosphate + H(+). It functions in the pathway pyrimidine metabolism; dUMP biosynthesis; dUMP from dCTP (dUTP route): step 2/2. This enzyme is involved in nucleotide metabolism: it produces dUMP, the immediate precursor of thymidine nucleotides and it decreases the intracellular concentration of dUTP so that uracil cannot be incorporated into DNA. This is Deoxyuridine 5'-triphosphate nucleotidohydrolase from Caldanaerobacter subterraneus subsp. tengcongensis (strain DSM 15242 / JCM 11007 / NBRC 100824 / MB4) (Thermoanaerobacter tengcongensis).